The primary structure comprises 461 residues: Photosystem II CP43 reaction center protein (461 aa).

A propeptide spanning residues 1 to 2 (ME) is cleaved from the precursor. At threonine 3 the chain carries N-acetylthreonine. Threonine 3 carries the phosphothreonine modification. The next 5 helical transmembrane spans lie at 57-81 (LFEVAHFVPEKPMYEQGLILLPHLA), 122-143 (LIGPETLEETFPFFGYVWKDKN), 166-188 (KALYFGGVYDTWAPGGGDVRIIT), 243-263 (QPWAWTRRAFVWSGEAYLSYS), and 279-300 (WFNNTAYPSEFYGPTGPEASQS). [CaMn4O5] cluster is bound at residue glutamate 355. Residues 435–459 (RARAAAAGFEKGIDRFNEPTLSLRP) traverse the membrane as a helical segment.

Belongs to the PsbB/PsbC family. PsbC subfamily. PSII is composed of 1 copy each of membrane proteins PsbA, PsbB, PsbC, PsbD, PsbE, PsbF, PsbH, PsbI, PsbJ, PsbK, PsbL, PsbM, PsbT, PsbX, PsbY, PsbZ, Psb30/Ycf12, at least 3 peripheral proteins of the oxygen-evolving complex and a large number of cofactors. It forms dimeric complexes. The cofactor is Binds multiple chlorophylls and provides some of the ligands for the Ca-4Mn-5O cluster of the oxygen-evolving complex. It may also provide a ligand for a Cl- that is required for oxygen evolution. PSII binds additional chlorophylls, carotenoids and specific lipids..

The protein localises to the plastid. The protein resides in the chloroplast thylakoid membrane. Functionally, one of the components of the core complex of photosystem II (PSII). It binds chlorophyll and helps catalyze the primary light-induced photochemical processes of PSII. PSII is a light-driven water:plastoquinone oxidoreductase, using light energy to abstract electrons from H(2)O, generating O(2) and a proton gradient subsequently used for ATP formation. This is Photosystem II CP43 reaction center protein from Oedogonium cardiacum (Filamentous green alga).